The following is a 180-amino-acid chain: Riboflavin kinase (180 aa).

Mg(2+)-binding residues include threonine 40 and asparagine 42. Residue glutamate 117 is the Nucleophile of the active site.

The protein belongs to the flavokinase family. The cofactor is Zn(2+). Mg(2+) serves as cofactor.

It catalyses the reaction riboflavin + ATP = FMN + ADP + H(+). It participates in cofactor biosynthesis; FMN biosynthesis; FMN from riboflavin (ATP route): step 1/1. Its function is as follows. Catalyzes the phosphorylation of riboflavin (vitamin B2) to form flavin mononucleotide (FMN) coenzyme. This chain is Riboflavin kinase (FMN1), found in Meyerozyma guilliermondii (strain ATCC 6260 / CBS 566 / DSM 6381 / JCM 1539 / NBRC 10279 / NRRL Y-324) (Yeast).